Consider the following 921-residue polypeptide: Ribosome-releasing factor 2, mitochondrial (921 aa).

The N-terminal 55 residues, 1-55 (MVSALLLRARQNGRAARCLDYPKVKCWALASLPKSSLEKPGFSQVRRFSVFHPQS), are a transit peptide targeting the mitochondrion. Residues 60 to 368 (DLTRNIGIIA…SVVDLLPSPQ (309 aa)) form the tr-type G domain. Residues 69–76 (AHIDAGKT), 152–156 (DTPGH), and 206–209 (NKMD) each bind GTP.

This sequence belongs to the TRAFAC class translation factor GTPase superfamily. Classic translation factor GTPase family. EF-G/EF-2 subfamily.

It is found in the mitochondrion. In terms of biological role, mitochondrial GTPase that mediates the disassembly of ribosomes from messenger RNA at the termination of mitochondrial protein biosynthesis. Not involved in the GTP-dependent ribosomal translocation step during translation elongation. The sequence is that of Ribosome-releasing factor 2, mitochondrial (mef2) from Emericella nidulans (strain FGSC A4 / ATCC 38163 / CBS 112.46 / NRRL 194 / M139) (Aspergillus nidulans).